Reading from the N-terminus, the 393-residue chain is NAD(P)H-quinone oxidoreductase subunit H, chloroplastic (393 aa).

The protein belongs to the complex I 49 kDa subunit family. In terms of assembly, NDH is composed of at least 16 different subunits, 5 of which are encoded in the nucleus.

The protein resides in the plastid. It is found in the chloroplast thylakoid membrane. It catalyses the reaction a plastoquinone + NADH + (n+1) H(+)(in) = a plastoquinol + NAD(+) + n H(+)(out). It carries out the reaction a plastoquinone + NADPH + (n+1) H(+)(in) = a plastoquinol + NADP(+) + n H(+)(out). NDH shuttles electrons from NAD(P)H:plastoquinone, via FMN and iron-sulfur (Fe-S) centers, to quinones in the photosynthetic chain and possibly in a chloroplast respiratory chain. The immediate electron acceptor for the enzyme in this species is believed to be plastoquinone. Couples the redox reaction to proton translocation, and thus conserves the redox energy in a proton gradient. This Nandina domestica (Heavenly bamboo) protein is NAD(P)H-quinone oxidoreductase subunit H, chloroplastic.